Reading from the N-terminus, the 148-residue chain is Azurin (148 aa).

The signal sequence occupies residues 1–20; it reads MLRKLAAVSLLSLLSAPLLA. One can recognise a Plastocyanin-like domain in the interval 21-148; the sequence is AECSVDIQGN…ALMKGTLTLK (128 aa). A disulfide bond links Cys23 and Cys46. Positions 66, 132, 137, and 141 each coordinate Cu cation.

The protein resides in the periplasm. Functionally, transfers electrons from cytochrome c551 to cytochrome oxidase. This is Azurin (azu) from Pseudomonas aeruginosa (strain ATCC 15692 / DSM 22644 / CIP 104116 / JCM 14847 / LMG 12228 / 1C / PRS 101 / PAO1).